A 1074-amino-acid polypeptide reads, in one-letter code: ADAMTS-like protein 4 (1074 aa).

Positions 1 to 24 (MENWTGRPWLYLLLLLSLPQLCLD) are cleaved as a signal peptide. The TSP type-1 1 domain maps to 48–93 (GPWVQWASCSQPCGVGVQRRSRTCQLPTVQLHPSLPLPPRPPRHPE). The tract at residues 77-342 (QLHPSLPLPP…QHPGAWLPLL (266 aa)) is disordered. Polar residues predominate over residues 103 to 119 (RPQTSPETLPLYRTQSR). The segment covering 132–152 (LGREETQEIRAARRSRLRDPI) has biased composition (basic and acidic residues). Over residues 206 to 226 (ANGSPQTELPPTELSVHTPSP) the composition is skewed to polar residues. A compositionally biased stretch (gly residues) spans 310 to 323 (GQQGQGPWGTGGTP). The N-linked (GlcNAc...) (complex) asparagine glycan is linked to Asn490. TSP type-1 domains follow at residues 723–782 (CPPY…QLRL), 783–842 (CGHW…GPCT), 845–909 (WFHS…GPCE), 910–969 (RTWR…QGQA), and 970–1026 (CQDR…QPCS). Asn773 carries N-linked (GlcNAc...) asparagine glycosylation. In terms of domain architecture, PLAC spans 1029–1066 (PDDQCKDSSPHCPLVVQARLCVYPYYTATCCRSCAHVL).

In terms of assembly, interacts with CTSB. Interacts with FBN1. Post-translationally, N-glycosylated. Can be O-fucosylated by POFUT2 on a serine or a threonine residue found within the consensus sequence C1-X(2)-(S/T)-C2-G of the TSP type-1 repeat domains where C1 and C2 are the first and second cysteine residue of the repeat, respectively. Fucosylated repeats can then be further glycosylated by the addition of a beta-1,3-glucose residue by the glucosyltransferase, B3GALTL. Fucosylation mediates the efficient secretion of ADAMTS family members. Can also be C-glycosylated with one or two mannose molecules on tryptophan residues within the consensus sequence W-X-X-W of the TPRs. N- and C-glycosylations can also facilitate secretion. As to expression, expressed in colon, heart, leukocyte, liver, lung, skeletal muscle, spleen, testis and placenta. Weaker expression in bone marrow, brain tissue, kidney and pancreas. Expression studies in fetal tissues reveal strong expression in heart, kidney, liver, lung and skeletal muscle, but weaker expression in fetal brain and skin.

It is found in the secreted. The protein localises to the extracellular space. The protein resides in the extracellular matrix. Its function is as follows. Positive regulation of apoptosis. May facilitate FBN1 microfibril biogenesis. This is ADAMTS-like protein 4 (ADAMTSL4) from Homo sapiens (Human).